A 602-amino-acid polypeptide reads, in one-letter code: Aspartate--tRNA(Asp/Asn) ligase (602 aa).

Residue E176 coordinates L-aspartate. Positions 200-203 are aspartate; sequence QQFK. Residues R222 and H452 each contribute to the L-aspartate site. Position 222–224 (222–224) interacts with ATP; it reads RDE. Residue E490 participates in ATP binding. An L-aspartate-binding site is contributed by R497. Position 542 to 545 (542 to 545) interacts with ATP; that stretch reads GIDR.

The protein belongs to the class-II aminoacyl-tRNA synthetase family. Type 1 subfamily. As to quaternary structure, homodimer.

The protein localises to the cytoplasm. It carries out the reaction tRNA(Asx) + L-aspartate + ATP = L-aspartyl-tRNA(Asx) + AMP + diphosphate. Functionally, aspartyl-tRNA synthetase with relaxed tRNA specificity since it is able to aspartylate not only its cognate tRNA(Asp) but also tRNA(Asn). Reaction proceeds in two steps: L-aspartate is first activated by ATP to form Asp-AMP and then transferred to the acceptor end of tRNA(Asp/Asn). The chain is Aspartate--tRNA(Asp/Asn) ligase from Rickettsia bellii (strain OSU 85-389).